A 504-amino-acid polypeptide reads, in one-letter code: Cytochrome P450 3A1 (504 aa).

A heme-binding site is contributed by C443.

Belongs to the cytochrome P450 family. It depends on heme as a cofactor.

The protein localises to the endoplasmic reticulum membrane. It localises to the microsome membrane. The enzyme catalyses an organic molecule + reduced [NADPH--hemoprotein reductase] + O2 = an alcohol + oxidized [NADPH--hemoprotein reductase] + H2O + H(+). In terms of biological role, cytochromes P450 are a group of heme-thiolate monooxygenases. In liver microsomes, this enzyme is involved in an NADPH-dependent electron transport pathway. It oxidizes a variety of structurally unrelated compounds, including steroids, fatty acids, and xenobiotics. In Rattus norvegicus (Rat), this protein is Cytochrome P450 3A1 (Cyp3a1).